A 349-amino-acid polypeptide reads, in one-letter code: 11-beta-hydroxysteroid dehydrogenase A (349 aa).

The helical; Signal-anchor for type II membrane protein transmembrane segment at 10 to 30 (LVAPPFTFFFLCLFLPPYWGL) threads the bilayer. The Proline-knob signature appears at 13–26 (PPFTFFFLCLFLPP). NADP(+) contacts are provided by residues 54 to 80 (GASS…SARR), D105, and 132 to 135 (NAAI). Residue S184 coordinates substrate. Residue Y197 is the Proton acceptor of the active site. NADP(+)-binding positions include 197-201 (YSASK) and K201.

It belongs to the short-chain dehydrogenases/reductases (SDR) family. As to expression, expressed in seeds (at protein level).

It is found in the lipid droplet. Its subcellular location is the membrane. The enzyme catalyses an 11beta-hydroxysteroid + NADP(+) = an 11-oxosteroid + NADPH + H(+). Functionally, has dehydrogenase activity against 11 beta-hydroxysteroid and 17 beta-hydroxysteroid. May be involved in signal transduction regulated by various sterols. This chain is 11-beta-hydroxysteroid dehydrogenase A, found in Arachis hypogaea (Peanut).